We begin with the raw amino-acid sequence, 540 residues long: Amino acid transporter AVT1B (540 aa).

Over residues 1 to 11 (MNHSTSDQSLY) the composition is skewed to polar residues. The disordered stretch occupies residues 1–55 (MNHSTSDQSLYIESDDGDDERKHLSDDEDDDGTLSDTSDAYNQNQHHLSKASPYS). Transmembrane regions (helical) follow at residues 155 to 175 (AVLN…PYAV), 180 to 200 (WLGL…GLLL), 227 to 247 (ILVS…YIIL), 273 to 293 (LFAL…DLSV), 297 to 317 (ISAG…WVGL), 332 to 352 (LATL…HGVF), 367 to 387 (AVLL…AVMG), 412 to 432 (IALW…LSPV), 452 to 474 (IAIR…FFGL), 478 to 500 (LIGS…LSIL), and 511 to 531 (ICIL…YSAL).

The protein belongs to the amino acid/polyamine transporter 2 family. Amino acid/auxin permease (AAAP) (TC 2.A.18.5) subfamily.

Its subcellular location is the membrane. The chain is Amino acid transporter AVT1B from Arabidopsis thaliana (Mouse-ear cress).